We begin with the raw amino-acid sequence, 283 residues long: MAPSPSKRKERSEDRAKERGKEKAPGKEVTEKDRGRDKAKKRRSGSSGSSSSSHSRSSSSSSSSSGSSSGSSSGSSSSASSRSGSSSSSRSSSSSSSSGSPSPSRRRHDNRRRSRSKSKQPKRDEKERKRRSPSPRPTKVHIGRLTRNVTKDHILEIFSTYGKIKMIDMPVDRYHPHLSKGYAYVEFEAPEEAEKALKHMDGGQIDGQEITASAVLTPWPMRPMPRRFSPPRRMLPPPPMWRRSPPRMRRRSRSPRRRSPVRRRSRSPARRRHRSRSSSNSSR.

Disordered regions lie at residues 1–140 and 221–283; these read MAPS…PTKV and MRPM…NSSR. Residues 10-36 are compositionally biased toward basic and acidic residues; sequence ERSEDRAKERGKEKAPGKEVTEKDRGR. A compositionally biased stretch (low complexity) spans 45 to 103; sequence GSSGSSSSSHSRSSSSSSSSSGSSSGSSSGSSSSASSRSGSSSSSRSSSSSSSSGSPSP. 2 stretches are compositionally biased toward basic residues: residues 104–120 and 128–140; these read SRRR…KSKQ and RKRR…PTKV. The 80-residue stretch at 161–240 folds into the RRM domain; it reads YGKIKMIDMP…PRRMLPPPPM (80 aa). Over residues 244–276 the composition is skewed to basic residues; the sequence is SPPRMRRRSRSPRRRSPVRRRSRSPARRRHRSR.

The protein belongs to the splicing factor SR family. As to quaternary structure, component of the active spliceosome.

It localises to the nucleus. The protein localises to the nucleus speckle. The protein resides in the cytoplasm. Component of a splicing-dependent multiprotein exon junction complex (EJC) deposited at splice junction on mRNAs. The EJC is a dynamic structure consisting of a few core proteins and several more peripheral nuclear and cytoplasmic associated factors that join the complex only transiently either during EJC assembly or during subsequent mRNA metabolism. Putative component of the spliceosome which enhances the formation of the ATP-dependent A complex of the spliceosome. May participate in mRNA 3'-end cleavage. Also mediates increase of mRNA abundance and translational efficiency. The chain is RNA-binding protein with serine-rich domain 1-A (rnps1-a) from Xenopus laevis (African clawed frog).